The chain runs to 251 residues: PF03932 family protein CutC (251 aa).

Belongs to the CutC family.

Its subcellular location is the cytoplasm. In Bacteroides fragilis (strain ATCC 25285 / DSM 2151 / CCUG 4856 / JCM 11019 / LMG 10263 / NCTC 9343 / Onslow / VPI 2553 / EN-2), this protein is PF03932 family protein CutC.